The following is a 624-amino-acid chain: Chaperone protein HtpG (624 aa).

The tract at residues 1–336 is a; substrate-binding; that stretch reads MKGQETRGFQ…SSDLPLNVSR (336 aa). The tract at residues 337-552 is b; sequence EILQDSTVTR…ADEMSTQMAK (216 aa). The interval 553–624 is c; the sequence is LFAAAGQKVP…IRRMNQLLVS (72 aa).

Belongs to the heat shock protein 90 family. In terms of assembly, homodimer.

The protein localises to the cytoplasm. Its function is as follows. Molecular chaperone. Has ATPase activity. This Shigella flexneri protein is Chaperone protein HtpG.